Reading from the N-terminus, the 592-residue chain is RNA-binding protein 47 (592 aa).

Residues 1-24 (MTAEDAAAAMSSDSAAGGAASAKA) show a composition bias toward low complexity. The segment at 1 to 26 (MTAEDAAAAMSSDSAAGGAASAKAPE) is disordered. RRM domains are found at residues 73–151 (CEVF…CSVD), 153–235 (CRLF…WAEP), and 248–320 (KILY…LAKP). 2 positions are modified to asymmetric dimethylarginine; alternate: Arg-397 and Arg-408. 2 positions are modified to omega-N-methylarginine; alternate: Arg-397 and Arg-408.

Belongs to the RRM RBM47 family. Homodimer. Interacts with A1CF. Interacts with APOBEC1; form an mRNA editing complex. Interacts with RBPMS.

It is found in the nucleus. It localises to the cytoplasm. In terms of biological role, single-stranded RNA-binding protein that functions in a variety of RNA processes, including alternative splicing, RNA stabilization, and RNA editing. Functions as an enzyme-substrate adapter for the cytidine deaminase APOBEC1. With APOBEC1 forms an mRNA editing complex involved into cytidine to uridine editing of a variety of mRNA molecules. Through the binding of their 3'UTR, also stabilizes a variety of mRNAs and regulates the expression of genes such as the interferon alpha/beta receptor and interleukin-10. Also involved in the alternative splicing of several genes including TJP1. Binds the pre-mRNA (U)GCAUG consensus sequences in downstream intronic regions of alternative exons, regulating their exclusion and inclusion into mRNAs. Independently of its RNA-binding activity, could negatively regulate MAVS by promoting its lysosomal degradation. The chain is RNA-binding protein 47 from Canis lupus familiaris (Dog).